Here is a 429-residue protein sequence, read N- to C-terminus: UDP-N-acetylglucosamine 1-carboxyvinyltransferase (429 aa).

22–23 (KN) is a binding site for phosphoenolpyruvate. Residue R102 participates in UDP-N-acetyl-alpha-D-glucosamine binding. The active-site Proton donor is C126. 2-(S-cysteinyl)pyruvic acid O-phosphothioketal is present on C126. UDP-N-acetyl-alpha-D-glucosamine is bound by residues 131–135 (RPVDL), D316, and I338.

Belongs to the EPSP synthase family. MurA subfamily.

It localises to the cytoplasm. It carries out the reaction phosphoenolpyruvate + UDP-N-acetyl-alpha-D-glucosamine = UDP-N-acetyl-3-O-(1-carboxyvinyl)-alpha-D-glucosamine + phosphate. Its pathway is cell wall biogenesis; peptidoglycan biosynthesis. In terms of biological role, cell wall formation. Adds enolpyruvyl to UDP-N-acetylglucosamine. In Methylorubrum extorquens (strain CM4 / NCIMB 13688) (Methylobacterium extorquens), this protein is UDP-N-acetylglucosamine 1-carboxyvinyltransferase.